A 630-amino-acid chain; its full sequence is Probable potassium transport system protein Kup 2 (630 aa).

12 helical membrane-spanning segments follow: residues A14–T34, V56–K76, V108–T128, P145–F165, A176–I196, F214–T234, W255–L275, L293–I313, M352–A372, Y375–W395, P402–A422, and L427–T447.

Belongs to the HAK/KUP transporter (TC 2.A.72) family.

Its subcellular location is the cell inner membrane. The enzyme catalyses K(+)(in) + H(+)(in) = K(+)(out) + H(+)(out). Transport of potassium into the cell. Likely operates as a K(+):H(+) symporter. The polypeptide is Probable potassium transport system protein Kup 2 (Rhodopseudomonas palustris (strain BisA53)).